A 177-amino-acid polypeptide reads, in one-letter code: Large ribosomal subunit protein uL6 (177 aa).

The protein belongs to the universal ribosomal protein uL6 family. As to quaternary structure, part of the 50S ribosomal subunit.

Functionally, this protein binds to the 23S rRNA, and is important in its secondary structure. It is located near the subunit interface in the base of the L7/L12 stalk, and near the tRNA binding site of the peptidyltransferase center. In Bordetella petrii (strain ATCC BAA-461 / DSM 12804 / CCUG 43448), this protein is Large ribosomal subunit protein uL6.